Here is a 237-residue protein sequence, read N- to C-terminus: tRNA (guanine-N(7)-)-methyltransferase (237 aa).

4 residues coordinate S-adenosyl-L-methionine: Asp-35, Glu-60, Asn-87, and Asp-113. Residue Asp-113 is part of the active site. Residues Lys-117 and Asp-149 each contribute to the substrate site.

The protein belongs to the class I-like SAM-binding methyltransferase superfamily. TrmB family.

It catalyses the reaction guanosine(46) in tRNA + S-adenosyl-L-methionine = N(7)-methylguanosine(46) in tRNA + S-adenosyl-L-homocysteine. Its pathway is tRNA modification; N(7)-methylguanine-tRNA biosynthesis. In terms of biological role, catalyzes the formation of N(7)-methylguanine at position 46 (m7G46) in tRNA. The sequence is that of tRNA (guanine-N(7)-)-methyltransferase from Synechococcus sp. (strain CC9311).